A 245-amino-acid polypeptide reads, in one-letter code: Ribosome maturation factor RimP (245 aa).

The protein belongs to the RimP family.

It localises to the cytoplasm. Functionally, required for maturation of 30S ribosomal subunits. The sequence is that of Ribosome maturation factor RimP from Verminephrobacter eiseniae (strain EF01-2).